The sequence spans 251 residues: MARFTNCLLKNIFTRSQFDSAKRRQCLQYLNALRSLQHNGYKTVYFGETEIPETLVTGEDFSDSYYIHTPSWCILHAGGSQGWVPWKYRMFLRNDLCIKKEDSLFLEFCDVVKRAYGKCAIVVKGRRQQDEMKPKTDKEGEAKAYVPTSINLTSIACSPGVAKSYGHELISLPPYYNYLNPLDSAWSSMKWFIINNRKEFCLQSVDNVYTYRYILFSDLISKGIEKVNLTKWKAITNKVRRWENYYLAKFS.

The protein belongs to the FAM243 family.

This is an uncharacterized protein from Mus musculus (Mouse).